The sequence spans 261 residues: MTNQLHPFHMTNPSPWPLTGATAALLMTSGLIMWFHYNSSQLIMLGLLIMLLTLTQWWRDIVRESTFQGHHTPSVQNNLRYGMILFITSEILFFTGFFWAFYHSSLSPTAELGNIWPPTGITPLNPFEVPLLNTAVLLASGVTITWAHHSLMEGNRPQTLQALTLTIILGTYFTILQAMEYFEASFTIADSIYGSTFFVATGFHGLHVIIGSTFLIVCLMRQLKYHFTSHHHFGFEAAAWYWHFVDVIWLFLYLSIYWWGS.

Over 1–15 (MTNQLHPFHMTNPSP) the chain is Mitochondrial matrix. The helical transmembrane segment at 16-34 (WPLTGATAALLMTSGLIMW) threads the bilayer. Residues 35 to 40 (FHYNSS) lie on the Mitochondrial intermembrane side of the membrane. The helical transmembrane segment at 41 to 66 (QLIMLGLLIMLLTLTQWWRDIVREST) threads the bilayer. The Mitochondrial matrix segment spans residues 67-72 (FQGHHT). The chain crosses the membrane as a helical span at residues 73 to 105 (PSVQNNLRYGMILFITSEILFFTGFFWAFYHSS). The Mitochondrial intermembrane segment spans residues 106–128 (LSPTAELGNIWPPTGITPLNPFE). A helical transmembrane segment spans residues 129–152 (VPLLNTAVLLASGVTITWAHHSLM). At 153 to 155 (EGN) the chain is on the mitochondrial matrix side. Residues 156 to 183 (RPQTLQALTLTIILGTYFTILQAMEYFE) form a helical membrane-spanning segment. Residues 184 to 190 (ASFTIAD) lie on the Mitochondrial intermembrane side of the membrane. The helical transmembrane segment at 191–223 (SIYGSTFFVATGFHGLHVIIGSTFLIVCLMRQL) threads the bilayer. Topologically, residues 224 to 232 (KYHFTSHHH) are mitochondrial matrix. Residues 233–256 (FGFEAAAWYWHFVDVIWLFLYLSI) traverse the membrane as a helical segment. At 257–261 (YWWGS) the chain is on the mitochondrial intermembrane side.

The protein belongs to the cytochrome c oxidase subunit 3 family. As to quaternary structure, component of the cytochrome c oxidase (complex IV, CIV), a multisubunit enzyme composed of 14 subunits. The complex is composed of a catalytic core of 3 subunits MT-CO1, MT-CO2 and MT-CO3, encoded in the mitochondrial DNA, and 11 supernumerary subunits COX4I, COX5A, COX5B, COX6A, COX6B, COX6C, COX7A, COX7B, COX7C, COX8 and NDUFA4, which are encoded in the nuclear genome. The complex exists as a monomer or a dimer and forms supercomplexes (SCs) in the inner mitochondrial membrane with NADH-ubiquinone oxidoreductase (complex I, CI) and ubiquinol-cytochrome c oxidoreductase (cytochrome b-c1 complex, complex III, CIII), resulting in different assemblies (supercomplex SCI(1)III(2)IV(1) and megacomplex MCI(2)III(2)IV(2)).

It is found in the mitochondrion inner membrane. It carries out the reaction 4 Fe(II)-[cytochrome c] + O2 + 8 H(+)(in) = 4 Fe(III)-[cytochrome c] + 2 H2O + 4 H(+)(out). Its function is as follows. Component of the cytochrome c oxidase, the last enzyme in the mitochondrial electron transport chain which drives oxidative phosphorylation. The respiratory chain contains 3 multisubunit complexes succinate dehydrogenase (complex II, CII), ubiquinol-cytochrome c oxidoreductase (cytochrome b-c1 complex, complex III, CIII) and cytochrome c oxidase (complex IV, CIV), that cooperate to transfer electrons derived from NADH and succinate to molecular oxygen, creating an electrochemical gradient over the inner membrane that drives transmembrane transport and the ATP synthase. Cytochrome c oxidase is the component of the respiratory chain that catalyzes the reduction of oxygen to water. Electrons originating from reduced cytochrome c in the intermembrane space (IMS) are transferred via the dinuclear copper A center (CU(A)) of subunit 2 and heme A of subunit 1 to the active site in subunit 1, a binuclear center (BNC) formed by heme A3 and copper B (CU(B)). The BNC reduces molecular oxygen to 2 water molecules using 4 electrons from cytochrome c in the IMS and 4 protons from the mitochondrial matrix. The protein is Cytochrome c oxidase subunit 3 (MT-CO3) of Pelomedusa subrufa (African side-necked turtle).